The primary structure comprises 121 residues: Small ribosomal subunit protein uS13 (121 aa).

The disordered stretch occupies residues 94–121 (GLPLRGQRTRTNARTRKGPRRAAQALKK).

It belongs to the universal ribosomal protein uS13 family. Part of the 30S ribosomal subunit. Forms a loose heterodimer with protein S19. Forms two bridges to the 50S subunit in the 70S ribosome.

Functionally, located at the top of the head of the 30S subunit, it contacts several helices of the 16S rRNA. In the 70S ribosome it contacts the 23S rRNA (bridge B1a) and protein L5 of the 50S subunit (bridge B1b), connecting the 2 subunits; these bridges are implicated in subunit movement. Contacts the tRNAs in the A and P-sites. The protein is Small ribosomal subunit protein uS13 of Burkholderia mallei (strain NCTC 10247).